A 253-amino-acid chain; its full sequence is Uracil-DNA glycosylase (253 aa).

Aspartate 79 (proton acceptor) is an active-site residue.

This sequence belongs to the uracil-DNA glycosylase (UDG) superfamily. UNG family.

It is found in the cytoplasm. The enzyme catalyses Hydrolyzes single-stranded DNA or mismatched double-stranded DNA and polynucleotides, releasing free uracil.. In terms of biological role, excises uracil residues from the DNA which can arise as a result of misincorporation of dUMP residues by DNA polymerase or due to deamination of cytosine. This chain is Uracil-DNA glycosylase, found in Xylella fastidiosa (strain M23).